A 113-amino-acid chain; its full sequence is Protein translation factor SUI1 homolog (113 aa).

The protein belongs to the SUI1 family.

Its function is as follows. Probably involved in translation. The polypeptide is Protein translation factor SUI1 homolog (Spuriopimpinella brachycarpa (Chamnamul)).